An 802-amino-acid chain; its full sequence is Leucine--tRNA ligase (802 aa).

Residues 39–50 (PYPSGAGLHVGH) carry the 'HIGH' region motif. Positions 574-578 (KMSKS) match the 'KMSKS' region motif. Residue Lys-577 coordinates ATP.

The protein belongs to the class-I aminoacyl-tRNA synthetase family.

Its subcellular location is the cytoplasm. The catalysed reaction is tRNA(Leu) + L-leucine + ATP = L-leucyl-tRNA(Leu) + AMP + diphosphate. In Macrococcus caseolyticus (strain JCSC5402) (Macrococcoides caseolyticum), this protein is Leucine--tRNA ligase.